We begin with the raw amino-acid sequence, 527 residues long: MNFYSLLPSRHDVSADNITEKFCQFCLCCNPWYAGADTRQLANAFNMIPKSEGQKFEIWVLFLLVRQYHQKIINSWSKLVGFLGVERKDEQSTQKIQQYVVRLKRWMSQTHVDAFFDYLLNKPNPYYLEIPETQPQVRCNVNVTDDLVIKSLRAGLMSHPDVNSSSISTMRTSTSPSNWIHSASASLDDNTHNLGSFVTNPHADSQECPTPQSLLMRASHHMSERGSQQAHQTTPQNHSLPHPPNMFEPPDEDHQLPSAANNSHNHDHAFQTAEAVGVADSIDPDWHQWPDDLRDVSSPKESDGLNDSWSRQTNQVETENVENEAGVPRKRGRPPGARNKIKRLRSEPSVSLTLSISWYERFEKLMHAQNTMLRSAFSHVARLPMETVSQLLSHYTETISQYLPPSETSPIPKTPNFKFISSTLLALVSSHSEILEASTDRLIWTVHQGPLTATICHAFNLEKAPSMHSLAEAQMIPDVPISHSNSMEPLDTVSSLKLEIAKLNAALKEKNLELENLKRKIMNAVFD.

3 disordered regions span residues 160-184 (PDVNSSSISTMRTSTSPSNWIHSAS), 219-265 (SHHM…NSHN), and 282-344 (IDPD…IKRL). Residues 164-177 (SSSISTMRTSTSPS) are compositionally biased toward low complexity. The span at 225-239 (RGSQQAHQTTPQNHS) shows a compositional bias: polar residues. The segment covering 284–303 (PDWHQWPDDLRDVSSPKESD) has biased composition (basic and acidic residues). 3 positions are modified to phosphoserine: serine 297, serine 298, and serine 302. Positions 328–343 (PRKRGRPPGARNKIKR) are enriched in basic residues.

The protein resides in the nucleus. In terms of biological role, binds, preferentially, to the Maundrell ARS consensus sequence within ARS3002. The chain is ARS-binding protein 2 (abp2) from Schizosaccharomyces pombe (strain 972 / ATCC 24843) (Fission yeast).